The primary structure comprises 148 residues: Large ribosomal subunit protein uL15 (148 aa).

The segment covering 1–12 (MSEPIKLHDLRP) has biased composition (basic and acidic residues). Residues 1–52 (MSEPIKLHDLRPAKGANKPKTRVGRGEASKGKTAGRGTKGTKARKQVSAAFE) form a disordered region.

It belongs to the universal ribosomal protein uL15 family. In terms of assembly, part of the 50S ribosomal subunit.

Functionally, binds to the 23S rRNA. In Corynebacterium diphtheriae (strain ATCC 700971 / NCTC 13129 / Biotype gravis), this protein is Large ribosomal subunit protein uL15.